Here is a 372-residue protein sequence, read N- to C-terminus: Solute carrier family 35 member F6 (372 aa).

The first 18 residues, 1-18 (MAWTKYQLFLAGLMLVTG), serve as a signal peptide directing secretion. The next 2 helical transmembrane spans lie at 48 to 68 (FVQA…FYLL) and 89 to 109 (LLFL…YVAL). The EamA domain occupies 105–160 (MYVALNMTSASSFQMLRGAVIIFTGLFSVAFLDRRLVPSQWLGILITIAGLVVVGL). Asn-110 carries N-linked (GlcNAc...) asparagine glycosylation. 7 helical membrane passes run 116 to 136 (SFQM…VAFL), 145 to 165 (WLGI…DLLS), 176 to 196 (VITG…QMVL), 211 to 231 (AVGI…VPMY), 261 to 281 (LIAL…FSGI), 293 to 312 (MVLD…ALGW), and 320 to 336 (ILGF…YNGL). Position 366 is a phosphothreonine (Thr-366).

It belongs to the SLC35F solute transporter family. In terms of assembly, interacts with SLC25A5.

The protein resides in the mitochondrion. It localises to the lysosome membrane. Functionally, involved in the maintenance of mitochondrial membrane potential in pancreatic ductal adenocarcinoma (PDAC) cells. Promotes pancreatic ductal adenocarcinoma (PDAC) cell growth. May play a role as a nucleotide-sugar transporter. This chain is Solute carrier family 35 member F6 (Slc35f6), found in Rattus norvegicus (Rat).